The primary structure comprises 276 residues: 1-(5-phosphoribosyl)-5-[(5-phosphoribosylamino)methylideneamino] imidazole-4-carboxamide isomerase (276 aa).

The protein belongs to the HisA/HisF family.

The protein localises to the cytoplasm. It carries out the reaction 1-(5-phospho-beta-D-ribosyl)-5-[(5-phospho-beta-D-ribosylamino)methylideneamino]imidazole-4-carboxamide = 5-[(5-phospho-1-deoxy-D-ribulos-1-ylimino)methylamino]-1-(5-phospho-beta-D-ribosyl)imidazole-4-carboxamide. It participates in amino-acid biosynthesis; L-histidine biosynthesis; L-histidine from 5-phospho-alpha-D-ribose 1-diphosphate: step 4/9. This chain is 1-(5-phosphoribosyl)-5-[(5-phosphoribosylamino)methylideneamino] imidazole-4-carboxamide isomerase (HIS6), found in Debaryomyces hansenii (strain ATCC 36239 / CBS 767 / BCRC 21394 / JCM 1990 / NBRC 0083 / IGC 2968) (Yeast).